Here is a 445-residue protein sequence, read N- to C-terminus: 3-phosphoshikimate 1-carboxyvinyltransferase (445 aa).

3 residues coordinate 3-phosphoshikimate: Lys-28, Ser-29, and Arg-33. A phosphoenolpyruvate-binding site is contributed by Lys-28. Residues Gly-101 and Arg-129 each contribute to the phosphoenolpyruvate site. Residues Ser-175, Gln-177, Asp-328, and Lys-355 each coordinate 3-phosphoshikimate. Gln-177 provides a ligand contact to phosphoenolpyruvate. Catalysis depends on Asp-328, which acts as the Proton acceptor. Residues Arg-359 and Arg-402 each coordinate phosphoenolpyruvate.

Belongs to the EPSP synthase family. As to quaternary structure, monomer.

Its subcellular location is the cytoplasm. It catalyses the reaction 3-phosphoshikimate + phosphoenolpyruvate = 5-O-(1-carboxyvinyl)-3-phosphoshikimate + phosphate. Its pathway is metabolic intermediate biosynthesis; chorismate biosynthesis; chorismate from D-erythrose 4-phosphate and phosphoenolpyruvate: step 6/7. In terms of biological role, catalyzes the transfer of the enolpyruvyl moiety of phosphoenolpyruvate (PEP) to the 5-hydroxyl of shikimate-3-phosphate (S3P) to produce enolpyruvyl shikimate-3-phosphate and inorganic phosphate. The chain is 3-phosphoshikimate 1-carboxyvinyltransferase from Rhodopseudomonas palustris (strain BisA53).